Here is a 279-residue protein sequence, read N- to C-terminus: Probable endonuclease 4 (279 aa).

Zn(2+) contacts are provided by H68, H108, E143, D177, H180, H214, D227, H229, and E259.

This sequence belongs to the AP endonuclease 2 family. It depends on Zn(2+) as a cofactor.

The enzyme catalyses Endonucleolytic cleavage to 5'-phosphooligonucleotide end-products.. Its function is as follows. Endonuclease IV plays a role in DNA repair. It cleaves phosphodiester bonds at apurinic or apyrimidinic (AP) sites, generating a 3'-hydroxyl group and a 5'-terminal sugar phosphate. The chain is Probable endonuclease 4 from Nitrosopumilus maritimus (strain SCM1).